A 74-amino-acid chain; its full sequence is Large ribosomal subunit protein uL14c (74 aa).

The protein belongs to the universal ribosomal protein uL14 family. Part of the 50S ribosomal subunit.

Its subcellular location is the plastid. It is found in the chloroplast. In terms of biological role, binds to 23S rRNA. In Oenothera ammophila (Evening primerose), this protein is Large ribosomal subunit protein uL14c (rpl14).